Reading from the N-terminus, the 234-residue chain is BTB/POZ domain-containing protein KCTD5 (234 aa).

Ala-2 carries the post-translational modification N-acetylalanine. Positions 44–146 (KWVRLNVGGT…LVKDKIRERD (103 aa)) constitute a BTB domain. The interval 213–234 (PYGTTSEPSEKAKILQERGSRM) is disordered. The span at 220–234 (PSEKAKILQERGSRM) shows a compositional bias: basic and acidic residues.

In terms of assembly, homopentamer. Interacts (via C-terminus) with GRASP55/GORASP2. Interacts with CUL3 and with ubiquitinated proteins. Interacts with CRY1.

The protein localises to the cytoplasm. The protein resides in the cytosol. Its subcellular location is the nucleus. Its function is as follows. Its interaction with CUL3 suggests that it may act as a substrate adapter in some E3 ligase complex. Does not affect the function of Kv channel Kv2.1/KCNB1, Kv1.2/KCNA2, Kv4.2/KCND2 and Kv3.4/KCNC4. This Rattus norvegicus (Rat) protein is BTB/POZ domain-containing protein KCTD5 (Kctd5).